A 659-amino-acid polypeptide reads, in one-letter code: Interferon-induced GTP-binding protein Mx2 (659 aa).

One can recognise a Dynamin-type G domain in the interval 65 to 338; sequence DLALPAIAVI…LISHICKSLP (274 aa). The G1 motif stretch occupies residues 75–82; that stretch reads GDQSSGKS. 75–82 is a GTP binding site; it reads GDQSSGKS. A G2 motif region spans residues 100 to 102; the sequence is VTR. The tract at residues 176–179 is G3 motif; it reads DLPG. GTP-binding positions include 176–180 and 245–248; these read DLPGI and TKPD. Residues 245-248 are G4 motif; that stretch reads TKPD. Residues 277-280 are G5 motif; the sequence is KCRG. Positions 547-567 are disordered; that stretch reads EAEEEERKHGKSRSSQSKNLQ. The GED domain maps to 571 to 659; that stretch reads MDEIFQHLNA…AQRRLAKFPG (89 aa).

This sequence belongs to the TRAFAC class dynamin-like GTPase superfamily. Dynamin/Fzo/YdjA family.

The protein localises to the cytoplasm. Interferon-induced dynamin-like GTPase with antiviral activity against vesicular stomatitis virus (VSV). This chain is Interferon-induced GTP-binding protein Mx2 (Mx2), found in Rattus norvegicus (Rat).